The sequence spans 355 residues: Guanine nucleotide-binding protein alpha-12 subunit (355 aa).

The G-alpha domain maps to 28-355 (RQINLLLLGS…EQNLKTLMMQ (328 aa)). The interval 31-44 (NLLLLGSGESGKST) is G1 motif. Residues 36–43 (GSGESGKS), 176–182 (LFCRKAT), 201–205 (DVGGQ), 270–273 (NKND), and alanine 327 each bind GTP. The Mg(2+) site is built by serine 43 and threonine 182. A G2 motif region spans residues 174-182 (DILFCRKAT). Positions 197 to 206 (FRFIDVGGQR) are G3 motif. The tract at residues 266–273 (ILFMNKND) is G4 motif. The interval 325 to 330 (TTAVDT) is G5 motif.

It belongs to the G-alpha family. G proteins are composed of 3 units; alpha, beta and gamma. The alpha chain contains the guanine nucleotide binding site.

Its function is as follows. Guanine nucleotide-binding proteins (G proteins) are involved as modulators or transducers in various transmembrane signaling systems. May play a role in resistance to fungal infection in the epidermis by regulating the up-regulation of several antimicrobial peptides of the NLP and CNC families. Upstream of plc-3, egl-8, tpa-1 and the p38-like pathway, required for the expression of antimicrobial peptide nlp-29 in the epidermis in response to fungal infection or physical injury. This Caenorhabditis briggsae protein is Guanine nucleotide-binding protein alpha-12 subunit (gpa-12).